Reading from the N-terminus, the 340-residue chain is MYTLARQLLFKLSPETSHDLSLDLIGAGGRLGLNGMLCKQPASLPVSVMGLNFANPVGLAAGLDKNGAAIDGFAQLGFGFVEIGTVTPRPQPGNPKPRLFRLPEATAIINRMGFNNLGVDHLLGRVRASRYKGVLGINIGKNFDTPVERAVDDYLICLDKVYTAASYITVNVSSPNTPGLRSLQFGDSLKQLLDALAERREQLAGAHGKRVPLAIKIAPDMSDEETALVAAALMESGMDAVIATNTTLGREGVEALPYGGEAGGLSGAPVLEKSTHIVKVLAGELGGKLPIIAAGGITEGRHAAEKIAAGASLVQIYSGFIYKGPALIREAVDAIAAMPR.

Residues 61–65 (AGLDK) and Thr85 contribute to the FMN site. Lys65 provides a ligand contact to substrate. Residue 110-114 (NRMGF) coordinates substrate. FMN contacts are provided by Asn138 and Asn171. A substrate-binding site is contributed by Asn171. Ser174 acts as the Nucleophile in catalysis. Asn176 contributes to the substrate binding site. Lys216 and Thr244 together coordinate FMN. 245-246 (NT) is a binding site for substrate. FMN contacts are provided by residues Gly267, Gly296, and 317–318 (YS).

This sequence belongs to the dihydroorotate dehydrogenase family. Type 2 subfamily. As to quaternary structure, monomer. FMN serves as cofactor.

The protein resides in the cell membrane. It catalyses the reaction (S)-dihydroorotate + a quinone = orotate + a quinol. Its pathway is pyrimidine metabolism; UMP biosynthesis via de novo pathway; orotate from (S)-dihydroorotate (quinone route): step 1/1. Functionally, catalyzes the conversion of dihydroorotate to orotate with quinone as electron acceptor. The polypeptide is Dihydroorotate dehydrogenase (quinone) (Pseudomonas putida (strain ATCC 47054 / DSM 6125 / CFBP 8728 / NCIMB 11950 / KT2440)).